Reading from the N-terminus, the 438-residue chain is Protein translocase subunit SecY (438 aa).

The chain crosses the membrane as a helical span at residues 1-43 (MKIKPILELIPEVKRPLKGVSFKEKIQWTGLVLILYFILGTID). At 44–54 (IYMGGAEMPAM) the chain is on the extracellular side. The segment at residues 55 to 62 (FAFWQTVT) is an intramembrane region (helical). A discontinuously helical membrane pass occupies residues 55–83 (FAFWQTVTASKMGTLITLGIGPIVTAGII). The stretch at 63–74 (ASKMGTLITLGI) is an intramembrane region. The segment at residues 75–83 (GPIVTAGII) is an intramembrane region (helical). Topologically, residues 84–104 (MQLLVGSELISLDLSKPMNRA) are cytoplasmic. A helical membrane pass occupies residues 105–129 (LFQGLQKLFGIFLCFLEAVMFVGAG). Topologically, residues 130–136 (AFGVVNS) are extracellular. Residues 137 to 161 (TLALILVLQLALGAILVIYLDEIVS) traverse the membrane as a helical segment. At 162–167 (RYGIGS) the chain is on the cytoplasmic side. The helical transmembrane segment at 168 to 186 (GIGLFIAAGVAQTIFVGAF) threads the bilayer. Residues 187–209 (GAEGYLWKFFSAMSVGSLGIAFE) lie on the Extracellular side of the membrane. Residues 210 to 231 (YILPILSTLFVFLVVVYVESIR) traverse the membrane as a helical segment. The Cytoplasmic portion of the chain corresponds to 232 to 256 (VEIPLAHGRVKGAVGKYPIKFIYVS). Residues 257-278 (NLPVILAAALFANIQLWGMFLD) form a helical membrane-spanning segment. Topologically, residues 279–315 (RMGYPILGQYSNGTAVSGIAYYFSTPYGISNIISDPL) are extracellular. A helical membrane pass occupies residues 316–335 (HAIFYTLMMVIFCILFGLFW). Residues 336–378 (VETSGLDAKSMAKKLGNLDMAIKGFRKSQKSIEQRLKRYIKPI) lie on the Cytoplasmic side of the membrane. Residues 379 to 397 (TVMGSAFVGFLAAAADFTG) form a helical membrane-spanning segment. Residues 398-400 (ALG) are Extracellular-facing. A helical transmembrane segment spans residues 401–415 (GGTGVLLTVSIVYRL). The Cytoplasmic segment spans residues 416 to 438 (YEQLVQEQLSELHPAVAKFVGKR).

It belongs to the SecY/SEC61-alpha family. In terms of assembly, component of the Sec protein translocase complex. Heterotrimer consisting of alpha (SecY), beta (SecG) and gamma (SecE) subunits. The heterotrimers can form oligomers, although 1 heterotrimer is thought to be able to translocate proteins. Interacts with the ribosome. May interact with SecDF, and other proteins may be involved.

Its subcellular location is the cell membrane. In terms of biological role, the central subunit of the protein translocation channel SecYEG. Consists of two halves formed by TMs 1-5 and 6-10. These two domains form a lateral gate at the front which open onto the bilayer between TMs 2 and 7, and are clamped together by SecE at the back. The channel is closed by both a pore ring composed of hydrophobic SecY resides and a short helix (helix 2A) on the extracellular side of the membrane which forms a plug. The plug probably moves laterally to allow the channel to open. The ring and the pore may move independently. The chain is Protein translocase subunit SecY from Methanococcus vannielii.